A 398-amino-acid chain; its full sequence is ATP-dependent RNA helicase eIF4A (398 aa).

The Q motif signature appears at D25–Q53. A Helicase ATP-binding domain is found at I56–I226. A69 to T76 contacts ATP. The DEAD box signature appears at D174 to D177. The Helicase C-terminal domain maps to G237–I398.

Belongs to the DEAD box helicase family. eIF4A subfamily. In terms of assembly, component of the eIF4F complex, which composition varies with external and internal environmental conditions. It is composed of at least eIF4A, eIF4E and eIF4G.

The protein resides in the cytoplasm. It carries out the reaction ATP + H2O = ADP + phosphate + H(+). Functionally, ATP-dependent RNA helicase which is a subunit of the eIF4F complex involved in cap recognition and is required for mRNA binding to ribosome. In the current model of translation initiation, eIF4A unwinds RNA secondary structures in the 5'-UTR of mRNAs which is necessary to allow efficient binding of the small ribosomal subunit, and subsequent scanning for the initiator codon. This is ATP-dependent RNA helicase eIF4A (tif1) from Botryotinia fuckeliana (strain B05.10) (Noble rot fungus).